We begin with the raw amino-acid sequence, 272 residues long: 2-C-methyl-D-erythritol 4-phosphate cytidylyltransferase (272 aa).

This sequence belongs to the IspD/TarI cytidylyltransferase family. IspD subfamily.

It catalyses the reaction 2-C-methyl-D-erythritol 4-phosphate + CTP + H(+) = 4-CDP-2-C-methyl-D-erythritol + diphosphate. It participates in isoprenoid biosynthesis; isopentenyl diphosphate biosynthesis via DXP pathway; isopentenyl diphosphate from 1-deoxy-D-xylulose 5-phosphate: step 2/6. Catalyzes the formation of 4-diphosphocytidyl-2-C-methyl-D-erythritol from CTP and 2-C-methyl-D-erythritol 4-phosphate (MEP). This Xanthomonas oryzae pv. oryzae (strain MAFF 311018) protein is 2-C-methyl-D-erythritol 4-phosphate cytidylyltransferase.